Consider the following 238-residue polypeptide: Sugar fermentation stimulation protein homolog (238 aa).

This sequence belongs to the SfsA family.

In Brucella abortus (strain S19), this protein is Sugar fermentation stimulation protein homolog.